A 124-amino-acid chain; its full sequence is Period circadian protein (124 aa).

The interval 30 to 124 (TAPVELDPPK…TVTLTESLLN (95 aa)) is disordered. Low complexity predominate over residues 71-96 (SGNFTTGSNVRMSSVTNTSNAGTGTS). Gly residues predominate over residues 97 to 107 (SAGGNGNGGSG).

In terms of assembly, forms a heterodimer with timeless (TIM); the complex then translocates into the nucleus. Phosphorylated with a circadian rhythmicity, probably by the double-time protein (dbt). Phosphorylation could be implicated in the stability of per monomer and in the formation of heterodimer per-tim.

It localises to the nucleus. The protein localises to the cytoplasm. It is found in the perinuclear region. Its function is as follows. Essential for biological clock functions. Determines the period length of circadian and ultradian rhythms; an increase in PER dosage leads to shortened circadian rhythms and a decrease leads to lengthened circadian rhythms. Essential for the circadian rhythmicity of locomotor activity, eclosion behavior, and for the rhythmic component of the male courtship song that originates in the thoracic nervous system. The biological cycle depends on the rhythmic formation and nuclear localization of the TIM-PER complex. Light induces the degradation of TIM, which promotes elimination of PER. Nuclear activity of the heterodimer coordinatively regulates PER and TIM transcription through a negative feedback loop. Behaves as a negative element in circadian transcriptional loop. Does not appear to bind DNA, suggesting indirect transcriptional inhibition. In Hirtodrosophila pictiventris (Fruit fly), this protein is Period circadian protein (per).